We begin with the raw amino-acid sequence, 200 residues long: Phospholipase A2 inhibitor NAI (200 aa).

Positions 1 to 19 (MKSLLFCCLFGTFLATGMC) are cleaved as a signal peptide. Cystine bridges form between cysteine 22–cysteine 46, cysteine 25–cysteine 32, cysteine 39–cysteine 67, cysteine 73–cysteine 94, cysteine 95–cysteine 100, cysteine 120–cysteine 145, cysteine 138–cysteine 165, and cysteine 171–cysteine 191.

This sequence belongs to the CNF-like-inhibitor family. In terms of assembly, heterotrimer of 2 subunits A and 1 subunit B; non-covalently linked. Expressed by the liver.

Its subcellular location is the secreted. Inhibits the enzymatic activity of all phospholipase A2 tested, binding with micromole to nanomole affinity. This Notechis ater (Black tiger snake) protein is Phospholipase A2 inhibitor NAI.